Consider the following 278-residue polypeptide: Shikimate dehydrogenase (NADP(+)) (278 aa).

Residues 19-21 (SRS) and T66 contribute to the shikimate site. K70 acts as the Proton acceptor in catalysis. D82 contributes to the NADP(+) binding site. Positions 91 and 107 each coordinate shikimate. Residues 133–137 (GAGGA), 157–162 (NRTRAK), and I222 each bind NADP(+). Y224 provides a ligand contact to shikimate. NADP(+) is bound at residue G245.

This sequence belongs to the shikimate dehydrogenase family. As to quaternary structure, homodimer.

The enzyme catalyses shikimate + NADP(+) = 3-dehydroshikimate + NADPH + H(+). Its pathway is metabolic intermediate biosynthesis; chorismate biosynthesis; chorismate from D-erythrose 4-phosphate and phosphoenolpyruvate: step 4/7. Involved in the biosynthesis of the chorismate, which leads to the biosynthesis of aromatic amino acids. Catalyzes the reversible NADPH linked reduction of 3-dehydroshikimate (DHSA) to yield shikimate (SA). The chain is Shikimate dehydrogenase (NADP(+)) from Dinoroseobacter shibae (strain DSM 16493 / NCIMB 14021 / DFL 12).